The chain runs to 446 residues: tRNA-2-methylthio-N(6)-dimethylallyladenosine synthase (446 aa).

An MTTase N-terminal domain is found at 5-121; the sequence is RRFYIQTFGC…LPSLIDDAAS (117 aa). Residues C14, C50, C84, C157, C161, and C164 each coordinate [4Fe-4S] cluster. The 231-residue stretch at 143 to 373 folds into the Radical SAM core domain; the sequence is REGRISAFIP…IDLQQEISAE (231 aa). A TRAM domain is found at 376 to 439; the sequence is RRQVGTVAEV…SATLSGSREG (64 aa).

The protein belongs to the methylthiotransferase family. MiaB subfamily. In terms of assembly, monomer. The cofactor is [4Fe-4S] cluster.

The protein resides in the cytoplasm. It catalyses the reaction N(6)-dimethylallyladenosine(37) in tRNA + (sulfur carrier)-SH + AH2 + 2 S-adenosyl-L-methionine = 2-methylsulfanyl-N(6)-dimethylallyladenosine(37) in tRNA + (sulfur carrier)-H + 5'-deoxyadenosine + L-methionine + A + S-adenosyl-L-homocysteine + 2 H(+). Functionally, catalyzes the methylthiolation of N6-(dimethylallyl)adenosine (i(6)A), leading to the formation of 2-methylthio-N6-(dimethylallyl)adenosine (ms(2)i(6)A) at position 37 in tRNAs that read codons beginning with uridine. The chain is tRNA-2-methylthio-N(6)-dimethylallyladenosine synthase from Chlorobium luteolum (strain DSM 273 / BCRC 81028 / 2530) (Pelodictyon luteolum).